The sequence spans 764 residues: Thyrotropin receptor (764 aa).

A signal peptide spans 1 to 20 (MRPADLLQLVLLLDLPRDLG). Residues 21–413 (GMGCSSPPCE…EFNPCEDIMG (393 aa)) are Extracellular-facing. An intrachain disulfide couples Cys-31 to Cys-41. Residues Asn-77, Asn-99, and Asn-113 are each glycosylated (N-linked (GlcNAc...) asparagine). LRR repeat units lie at residues 100–124 (LSKVTHIEIRNTRNLTYIDPDALKE), 125–150 (LPLLKFLGIFNTGLKMFPDLTKVYST), 152–174 (IFFILEITDNPYMTSIPVNAFQG), 176–199 (CNETLTLKLYNNGFTSVQGYAFNG), 200–223 (TKLDAVYLNKNKYLTVIDKDAFGG), 227–248 (GPSLLDVSQTSVTALPSKGLEH), and 250–271 (KELIARNTWTLKKLPLSLSFLH). Asn-177 and Asn-198 each carry an N-linked (GlcNAc...) asparagine glycan. The N-linked (GlcNAc...) asparagine glycan is linked to Asn-302. Tyr-385 is modified (sulfotyrosine). A helical transmembrane segment spans residues 414–441 (YKFLRIVVWFVSLLALLGNVFVLLILLT). Topologically, residues 442 to 450 (SHYKLNVPR) are cytoplasmic. The chain crosses the membrane as a helical span at residues 451–473 (FLMCNLAFADFCMGMYLLLIASV). Over 474 to 494 (DLYTHSEYYNHAIDWQTGPGC) the chain is Extracellular. A disulfide bond links Cys-494 and Cys-569. Residues 495–517 (NTAGFFTVFASELSVYTLTVITL) traverse the membrane as a helical segment. Residues 518 to 537 (ERWYAITFAMRLDRKIRLRH) are Cytoplasmic-facing. Residues 538–560 (ACAIMVGGWVCCFLLALLPLVGI) form a helical membrane-spanning segment. Residues 561-580 (SSYAKVSICLPMDTETPLAL) lie on the Extracellular side of the membrane. Residues 581 to 602 (AYIVFVLTLNIVAFVIVCCCYV) form a helical membrane-spanning segment. Over 603 to 625 (KIYITVRNPQYNPGDKDTKIAKR) the chain is Cytoplasmic. The helical transmembrane segment at 626–649 (MAVLIFTDFICMAPISFYALSAIL) threads the bilayer. Residues 650 to 660 (NKPLITVSNSK) lie on the Extracellular side of the membrane. The chain crosses the membrane as a helical span at residues 661 to 682 (ILLVLFYPLNSCANPFLYAIFT). At 683–764 (KAFQRDVFIL…ISEEYMQTVL (82 aa)) the chain is on the cytoplasmic side. The short motif at 762 to 764 (TVL) is the PDZ-binding element.

The protein belongs to the G-protein coupled receptor 1 family. FSH/LSH/TSH subfamily. As to quaternary structure, interacts with heterodimer GPHA2:GPHB5; this interaction stimulates cAMP production. Interacts (via the PDZ-binding motif) with SCRIB; regulates TSHR trafficking and function. Post-translationally, glycosylated. In terms of processing, sulfated. Sulfation on Tyr-385 plays a role in thyrotropin receptor binding and activation. As to expression, expressed in thyroide cells (at protein level). Expressed in the thyroid.

The protein localises to the cell membrane. The protein resides in the basolateral cell membrane. Functionally, receptor for the thyroid-stimulating hormone (TSH) or thyrotropin. Also acts as a receptor for the heterodimeric glycoprotein hormone (GPHA2:GPHB5) or thyrostimulin. The activity of this receptor is mediated by G proteins which activate adenylate cyclase. Plays a central role in controlling thyroid cell metabolism. This chain is Thyrotropin receptor (TSHR), found in Homo sapiens (Human).